The chain runs to 162 residues: Phospholipase A and acyltransferase 3 (162 aa).

The Cytoplasmic segment spans residues Met1–Val133. The LRAT domain occupies Leu13–Gln129. Residues His23 and His35 contribute to the active site. The Acyl-thioester intermediate role is filled by Cys113. The helical transmembrane segment at Ile134 to Phe154 threads the bilayer. The Lumenal portion of the chain corresponds to Ser155 to Gln162.

This sequence belongs to the H-rev107 family. In terms of assembly, interacts with PPP2R1A; this interaction might decrease PP2A activity.

It localises to the cell membrane. Its subcellular location is the cytoplasm. The protein localises to the cytosol. The protein resides in the perinuclear region. It is found in the peroxisome membrane. It localises to the mitochondrion membrane. Its subcellular location is the nucleus envelope. The protein localises to the lysosome membrane. The protein resides in the endoplasmic reticulum membrane. The catalysed reaction is a 1,2-diacyl-sn-glycero-3-phosphocholine + H2O = a 1-acyl-sn-glycero-3-phosphocholine + a fatty acid + H(+). It catalyses the reaction a 1,2-diacyl-sn-glycero-3-phosphocholine + H2O = a 2-acyl-sn-glycero-3-phosphocholine + a fatty acid + H(+). It carries out the reaction 1,2-dihexadecanoyl-sn-glycero-3-phosphocholine + H2O = 1-hexadecanoyl-sn-glycero-3-phosphocholine + hexadecanoate + H(+). The enzyme catalyses 1,2-dihexadecanoyl-sn-glycero-3-phosphocholine + H2O = 2-hexadecanoyl-sn-glycero-3-phosphocholine + hexadecanoate + H(+). The catalysed reaction is 1-hexadecanoyl-2-(9Z-octadecenoyl)-sn-glycero-3-phosphocholine + H2O = 2-(9Z-octadecenoyl)-sn-glycero-3-phosphocholine + hexadecanoate + H(+). It catalyses the reaction 1-hexadecanoyl-2-(9Z-octadecenoyl)-sn-glycero-3-phosphocholine + H2O = 1-hexadecanoyl-sn-glycero-3-phosphocholine + (9Z)-octadecenoate + H(+). It carries out the reaction 1-hexadecanoyl-2-(5Z,8Z,11Z,14Z-eicosatetraenoyl)-sn-glycero-3-phosphocholine + H2O = 1-hexadecanoyl-sn-glycero-3-phosphocholine + (5Z,8Z,11Z,14Z)-eicosatetraenoate + H(+). The enzyme catalyses 1-hexadecanoyl-2-(5Z,8Z,11Z,14Z-eicosatetraenoyl)-sn-glycero-3-phosphocholine + H2O = 2-(5Z,8Z,11Z,14Z)-eicosatetraenoyl-sn-glycero-3-phosphocholine + hexadecanoate + H(+). The catalysed reaction is 1-hexadecanoyl-2-(9Z,12Z-octadecadienoyl)-sn-glycero-3-phosphoethanolamine + H2O = 1-hexadecanoyl-sn-glycero-3-phosphoethanolamine + (9Z,12Z)-octadecadienoate + H(+). It catalyses the reaction 1-hexadecanoyl-2-(9Z,12Z-octadecadienoyl)-sn-glycero-3-phosphoethanolamine + H2O = 2-(9Z,12Z)-octadecadienoyl-sn-glycero-3-phosphoethanolamine + hexadecanoate + H(+). It carries out the reaction 1-hexadecanoyl-2-(5Z,8Z,11Z,14Z-eicosatetraenoyl)-sn-glycero-3-phosphoethanolamine + H2O = 1-hexadecanoyl-sn-glycero-3-phosphoethanolamine + (5Z,8Z,11Z,14Z)-eicosatetraenoate + H(+). The enzyme catalyses 1-hexadecanoyl-2-(5Z,8Z,11Z,14Z-eicosatetraenoyl)-sn-glycero-3-phosphoethanolamine + H2O = 2-(5Z,8Z,11Z,14Z)-eicosatetraenoyl-sn-glycero-3-phosphoethanolamine + hexadecanoate + H(+). The catalysed reaction is 1-hexanoyl-2-acyl-sn-glycero-3-phosphocholine + H2O = hexanoate + a 2-acyl-sn-glycero-3-phosphocholine + H(+). It catalyses the reaction 1-hexanoyl-2-acyl-sn-glycero-3-phosphocholine + H2O = 1-hexanoyl-sn-glycero-3-phosphocholine + a fatty acid + H(+). It carries out the reaction 1,2-diheptadecanoyl-sn-glycero-3-phosphoethanolamine + 1-(9Z-octadecenoyl)-2-hexadecanoyl-sn-glycero-3-phosphocholine = 1,2-diheptadecanoyl-sn-glycero-3-phospho-N-hexadecanoyl-ethanolamine + 1-(9Z-octadecenoyl)-sn-glycero-3-phosphocholine + H(+). The enzyme catalyses 1,2-diheptadecanoyl-sn-glycero-3-phosphoethanolamine + 1-(9Z-octadecenoyl)-2-hexadecanoyl-sn-glycero-3-phosphocholine = 1,2-diheptadecanoyl-sn-glycero-3-phospho-N-(9Z-octadecenoyl)-ethanolamine + 2-hexadecanoyl-sn-glycero-3-phosphocholine + H(+). The catalysed reaction is 1,2-dihexanoyl-sn-glycero-3-phosphoethanolamine + 2-heptanoyl-sn-glycero-3-phosphocholine = hexanoyl-sn-glycero-3-phosphoethanolamine + 1-hexanoyl-2-heptanoyl-sn-glycero-3-phosphocholine. It catalyses the reaction 1-hexadecanoyl-2-octadecanoyl-sn-glycero-3-phosphocholine + H2O = octadecanoate + 1-hexadecanoyl-sn-glycero-3-phosphocholine + H(+). It carries out the reaction 1-hexadecanoyl-2-octadecanoyl-sn-glycero-3-phosphocholine + H2O = 2-octadecanoyl-sn-glycero-3-phosphocholine + hexadecanoate + H(+). The enzyme catalyses 1-octadecanoyl-2-hexadecanoyl-sn-glycero-3-phosphocholine + H2O = 1-octadecanoyl-sn-glycero-3-phosphocholine + hexadecanoate + H(+). The catalysed reaction is 1-octadecanoyl-2-hexadecanoyl-sn-glycero-3-phosphocholine + H2O = 2-hexadecanoyl-sn-glycero-3-phosphocholine + octadecanoate + H(+). It catalyses the reaction 1-hexadecanoyl-2-(9Z,12Z-octadecadienoyl)-sn-glycero-3-phosphocholine + H2O = (9Z,12Z)-octadecadienoate + 1-hexadecanoyl-sn-glycero-3-phosphocholine + H(+). It carries out the reaction 1-hexadecanoyl-2-(9Z,12Z-octadecadienoyl)-sn-glycero-3-phosphocholine + H2O = 2-(9Z,12Z-octadecadienoyl)-sn-glycero-3-phosphocholine + hexadecanoate + H(+). The enzyme catalyses 1,2-di-(9Z-octadecenoyl)-sn-glycero-3-phosphocholine + H2O = 2-(9Z-octadecenoyl)-sn-glycero-3-phosphocholine + (9Z)-octadecenoate + H(+). The catalysed reaction is 1,2-dihexadecanoyl-sn-glycero-3-phosphocholine + H2O = hexadecanoyl-sn-glycero-3-phosphocholine + hexadecanoate + H(+). It catalyses the reaction 1,2-di-(9Z-octadecenoyl)-sn-glycero-3-phosphocholine + H2O = 1-(9Z-octadecenoyl)-sn-glycero-3-phosphocholine + (9Z)-octadecenoate + H(+). It carries out the reaction 1,2-di-(9Z-octadecenoyl)-sn-glycero-3-phosphoethanolamine + 1,2-dihexadecanoyl-sn-glycero-3-phosphocholine = hexadecanoyl-sn-glycero-3-phosphocholine + N-hexadecanoyl-1,2-di-(9Z-octadecenoyl)-sn-glycero-3-phosphoethanolamine + H(+). The enzyme catalyses 1,2-di-(9Z,12Z-octadecadienoyl)-sn-glycero-3-phosphocholine + H2O = 1-(9Z,12Z)-octadecadienoyl-sn-glycero-3-phosphocholine + (9Z,12Z)-octadecadienoate + H(+). Functionally, exhibits both phospholipase A1/2 and acyltransferase activities. Shows phospholipase A1 (PLA1) and A2 (PLA2), catalyzing the calcium-independent release of fatty acids from the sn-1 or sn-2 position of glycerophospholipids. For most substrates, PLA1 activity is much higher than PLA2 activity. Shows O-acyltransferase activity, catalyzing the transfer of a fatty acyl group from glycerophospholipid to the hydroxyl group of lysophospholipid. Shows N-acyltransferase activity, catalyzing the calcium-independent transfer of a fatty acyl group at the sn-1 position of phosphatidylcholine (PC) and other glycerophospholipids to the primary amine of phosphatidylethanolamine (PE), forming N-acylphosphatidylethanolamine (NAPE), which serves as precursor for N-acylethanolamines (NAEs). Exhibits high N-acyltransferase activity and low phospholipase A1/2 activity. Required for complete organelle rupture and degradation that occur during eye lens terminal differentiation, when fiber cells that compose the lens degrade all membrane-bound organelles in order to provide lens with transparency to allow the passage of light. Organelle membrane degradation is probably catalyzed by the phospholipase activity. Plays a role in phospholipid metabolism and adipogenesis. This chain is Phospholipase A and acyltransferase 3, found in Pongo abelii (Sumatran orangutan).